The primary structure comprises 367 residues: Phosphoribosylaminoimidazole-succinocarboxamide synthase (367 aa).

The protein belongs to the SAICAR synthetase family.

It carries out the reaction 5-amino-1-(5-phospho-D-ribosyl)imidazole-4-carboxylate + L-aspartate + ATP = (2S)-2-[5-amino-1-(5-phospho-beta-D-ribosyl)imidazole-4-carboxamido]succinate + ADP + phosphate + 2 H(+). The protein operates within purine metabolism; IMP biosynthesis via de novo pathway; 5-amino-1-(5-phospho-D-ribosyl)imidazole-4-carboxamide from 5-amino-1-(5-phospho-D-ribosyl)imidazole-4-carboxylate: step 1/2. The protein is Phosphoribosylaminoimidazole-succinocarboxamide synthase of Shewanella amazonensis (strain ATCC BAA-1098 / SB2B).